The following is a 149-amino-acid chain: Alpha-crystallin A chain (149 aa).

The region spanning 41–149 (LFRSVLESGI…DPSHSERPIP (109 aa)) is the sHSP domain. Residues H89, E91, H96, and H143 each coordinate Zn(2+).

It belongs to the small heat shock protein (HSP20) family. Heteropolymer composed of three CRYAA and one CRYAB subunits. Inter-subunit bridging via zinc ions enhances stability, which is crucial as there is no protein turn over in the lens. Can also form homodimers and homotetramers (dimers of dimers) which serve as the building blocks of homooligomers. Within homooligomers, the zinc-binding motif is created from residues of 3 different molecules. His-89 and Glu-91 from one molecule are ligands of the zinc ion, and His-96 and His-143 residues from additional molecules complete the site with tetrahedral coordination geometry.

The protein resides in the cytoplasm. It is found in the nucleus. Functionally, contributes to the transparency and refractive index of the lens. May act as a chaperone, preventing aggregation of various proteins under a wide range of stress conditions. The protein is Alpha-crystallin A chain (CRYAA) of Eudromia elegans (Elegant crested-tinamou).